The sequence spans 306 residues: UDP-N-acetylenolpyruvoylglucosamine reductase (306 aa).

In terms of domain architecture, FAD-binding PCMH-type spans 25-188 (RVGGPADWLF…IEARFRAEPG (164 aa)). Residue Arg-168 is part of the active site. Residues 199–214 (EQLARRDASQPTKDRS) are compositionally biased toward basic and acidic residues. Residues 199–232 (EQLARRDASQPTKDRSAGSTFRNPAGYSSTGRAD) form a disordered region. Residues 215–229 (AGSTFRNPAGYSSTG) are compositionally biased toward polar residues. Catalysis depends on Ser-217, which acts as the Proton donor. Glu-299 is a catalytic residue.

Belongs to the MurB family. The cofactor is FAD.

Its subcellular location is the cytoplasm. The enzyme catalyses UDP-N-acetyl-alpha-D-muramate + NADP(+) = UDP-N-acetyl-3-O-(1-carboxyvinyl)-alpha-D-glucosamine + NADPH + H(+). It functions in the pathway cell wall biogenesis; peptidoglycan biosynthesis. Cell wall formation. The sequence is that of UDP-N-acetylenolpyruvoylglucosamine reductase from Paracoccus denitrificans (strain Pd 1222).